The sequence spans 160 residues: Transcription factor 12 (160 aa).

The disordered stretch occupies residues 1–58; it reads NKEKDENLHEPPSSDDMKSDDESSQKDIKVSSRGRTSTNEDEDLNPEQKIEREKERRM. A compositionally biased stretch (basic and acidic residues) spans 15–30; the sequence is DDMKSDDESSQKDIKV. At serine 19 the chain carries Phosphoserine. Lysine 29 is covalently cross-linked (Glycyl lysine isopeptide (Lys-Gly) (interchain with G-Cter in SUMO2)). The residue at position 36 (threonine 36) is a Phosphothreonine. At serine 37 the chain carries Phosphoserine. Residues 46-58 are compositionally biased toward basic and acidic residues; the sequence is PEQKIEREKERRM. Residues 55-108 enclose the bHLH domain; sequence ERRMANNARERLRVRDINEAFKELGRMCQLHLKSEKPQTKLLILHQAVAVILSL. Residues lysine 87 and lysine 131 each participate in a glycyl lysine isopeptide (Lys-Gly) (interchain with G-Cter in SUMO2) cross-link. The segment at 110-133 is class A specific domain; the sequence is QQVRERNLNPKAACLKRREEEKVS. Positions 132–160 are disordered; sequence VSVVSAEPPTTLPGTHPGLSETTNPMGHM. Over residues 139–150 the composition is skewed to low complexity; that stretch reads PPTTLPGTHPGL. The span at 151 to 160 shows a compositional bias: polar residues; sequence SETTNPMGHM.

Efficient DNA binding requires dimerization with another bHLH protein. Forms homo- or heterooligomers with myogenin, E12 and ITF2 proteins. Interacts with PTF1A. Interacts with RUNX1T1. Interacts with NEUROD2. Interacts with BHLHA9.

It localises to the nucleus. Functionally, transcriptional regulator. Involved in the initiation of neuronal differentiation. Activates transcription by binding to the E box (5'-CANNTG-3'). May be involved in the functional network that regulates the development of the GnRH axis. The chain is Transcription factor 12 (TCF12) from Papio hamadryas (Hamadryas baboon).